A 219-amino-acid polypeptide reads, in one-letter code: Lipid transferase CIDEB (219 aa).

The CIDE-N domain maps to 34–110 (PQRPFRVCDH…VLQSGQSWSP (77 aa)).

The protein belongs to the CIDE family. In terms of assembly, interacts with DFFA. Interacts with DFFB; inhibited by DFFB. Interacts with APOB. Interacts with PREB/SEC12; facilitating loading of SCAP-SREBP into COPII vesicles. As to quaternary structure, (Microbial infection) Interacts (via N-terminus) with HCV non-structural protein 5A (via N-terminus); this interaction seems to regulate the association of HCV particles with ApoE. In terms of tissue distribution, highly expressed in liver and small intestine and, at lower levels, in colon, kidney and spleen.

The protein resides in the lipid droplet. It localises to the endoplasmic reticulum membrane. The protein localises to the golgi apparatus. It is found in the cytoplasmic vesicle. Its subcellular location is the COPI-coated vesicle. Functionally, lipid transferase specifically expressed in hepatocytes, which promotes unilocular lipid droplet formation by mediating lipid droplet fusion. Lipid droplet fusion promotes their enlargement, restricting lipolysis and favoring lipid storage. Localizes on the lipid droplet surface, at focal contact sites between lipid droplets, and mediates atypical lipid droplet fusion by promoting directional net neutral lipid transfer from the smaller to larger lipid droplets. The transfer direction may be driven by the internal pressure difference between the contacting lipid droplet pair. Promotes lipid exchange and lipid droplet fusion in both small and large lipid droplet-containing hepatocytes. In addition to its role in lipid droplet fusion, also involved in cytoplasmic vesicle biogenesis and transport. Required for very-low-density lipoprotein (VLDL) lipidation and maturation. Probably involved in the biogenesis of VLDL transport vesicles by forming a COPII vesicle coat and facilitating the formation of endoplasmic reticulum-derived large vesicles. Also involved in sterol-regulated export of the SCAP-SREBP complex, composed of SCAP, SREBF1/SREBP1 and SREBF2/SREBP2, by promoting loading of SCAP-SREBP into COPII vesicles. May also activate apoptosis. Its function is as follows. (Microbial infection) Involved in Hepatatis C virus (HCV) assembly and required for HCV entry into hepatocytes. The protein is Lipid transferase CIDEB of Homo sapiens (Human).